The chain runs to 316 residues: L-lactate dehydrogenase (316 aa).

NAD(+)-binding positions include 13 to 15, 34 to 36, tyrosine 67, and 79 to 83; these read GMI, FDI, and TAGFT. A substrate-binding site is contributed by arginine 95. Residues 125 to 127, leucine 150, and leucine 154 contribute to the NAD(+) site; that span reads VTN. Residues arginine 158 and histidine 182 each contribute to the substrate site. Histidine 182 is a binding site for NAD(+). The active-site Proton acceptor is histidine 182.

This sequence belongs to the LDH/MDH superfamily. LDH family. As to quaternary structure, homotetramer.

It catalyses the reaction (S)-lactate + NAD(+) = pyruvate + NADH + H(+). It participates in fermentation; pyruvate fermentation to lactate; (S)-lactate from pyruvate: step 1/1. This chain is L-lactate dehydrogenase, found in Plasmodium berghei.